The primary structure comprises 183 residues: Inner membrane-spanning protein YciB (183 aa).

Helical transmembrane passes span Ile22–Leu42, Met50–Asp70, Ala72–Ser92, Val118–Phe138, and Phe148–Leu168.

This sequence belongs to the YciB family.

Its subcellular location is the cell inner membrane. In terms of biological role, plays a role in cell envelope biogenesis, maintenance of cell envelope integrity and membrane homeostasis. The protein is Inner membrane-spanning protein YciB of Shewanella frigidimarina (strain NCIMB 400).